Reading from the N-terminus, the 311-residue chain is Ferrochelatase (311 aa).

Residues histidine 179 and glutamate 260 each contribute to the Fe cation site.

Belongs to the ferrochelatase family.

It is found in the cytoplasm. The catalysed reaction is heme b + 2 H(+) = protoporphyrin IX + Fe(2+). It participates in porphyrin-containing compound metabolism; protoheme biosynthesis; protoheme from protoporphyrin-IX: step 1/1. Functionally, catalyzes the ferrous insertion into protoporphyrin IX. The chain is Ferrochelatase from Helicobacter hepaticus (strain ATCC 51449 / 3B1).